Here is a 480-residue protein sequence, read N- to C-terminus: Initiation-specific alpha-1,6-mannosyltransferase (480 aa).

Residues 1–15 lie on the Cytoplasmic side of the membrane; that stretch reads MSRKLSHLIATRKSK. Residues 16 to 30 form a helical; Signal-anchor for type II membrane protein membrane-spanning segment; the sequence is TIVVTVLLIYSLLTF. At 31–480 the chain is on the lumenal side; sequence HLSNKRLLSQ…EDADKNAGHK (450 aa). Positions 187–189 match the DXD motif motif; sequence DMD. 4 N-linked (GlcNAc...) asparagine glycosylation sites follow: asparagine 203, asparagine 281, asparagine 341, and asparagine 393.

Belongs to the glycosyltransferase 32 family. Mn(2+) is required as a cofactor. In terms of processing, glycosylated.

It localises to the endoplasmic reticulum membrane. Its subcellular location is the golgi apparatus membrane. It carries out the reaction Transfers an alpha-D-mannosyl residue from GDP-mannose into lipid-linked oligosaccharide, forming an alpha-(1-&gt;6)-D-mannosyl-D-mannose linkage.. Mannosyltransferase involved in outer chain elongation of asparagine-linked oligosaccharides of the type Man(9)GlcNAc(2). Adds the first alpha-1,6-mannose to the Man(8)GlcNAc(2) and Man(9)GlcNAc(2), but not Man(5)GlcNAc(2), endoplasmic reticulum intermediates. Represents the first enzymatic event required for synthesis of outer chain mannose linkages on yeast secretory proteins. Also has the potential to transfer a second alpha-1,6-mannose to the Man(8)GlcNAc(2) core oligosaccharide. The chain is Initiation-specific alpha-1,6-mannosyltransferase from Saccharomyces cerevisiae (strain ATCC 204508 / S288c) (Baker's yeast).